The sequence spans 757 residues: Probable serine/threonine-protein kinase pknA2 (757 aa).

A Protein kinase domain is found at 14 to 274 (YRIVRNIAEG…DGAAAAEELS (261 aa)). Residues 20–28 (IAEGGMATV) and K43 contribute to the ATP site. Residue D140 is the Proton acceptor of the active site. Residues 344 to 387 (DTGGAADVNPPAPPVAPTTALDSSTPADASAPHKTQIMAQSGSE) form a disordered region. PASTA domains follow at residues 466–539 (DANA…VVSK), 545–614 (TIPK…TLSK), and 615–681 (GPMP…VISK).

The protein belongs to the protein kinase superfamily. Ser/Thr protein kinase family.

The enzyme catalyses L-seryl-[protein] + ATP = O-phospho-L-seryl-[protein] + ADP + H(+). It carries out the reaction L-threonyl-[protein] + ATP = O-phospho-L-threonyl-[protein] + ADP + H(+). The sequence is that of Probable serine/threonine-protein kinase pknA2 (pknA2) from Bifidobacterium longum (strain NCC 2705).